Consider the following 301-residue polypeptide: Glycine--tRNA ligase alpha subunit (301 aa).

The protein belongs to the class-II aminoacyl-tRNA synthetase family. As to quaternary structure, tetramer of two alpha and two beta subunits.

Its subcellular location is the cytoplasm. It catalyses the reaction tRNA(Gly) + glycine + ATP = glycyl-tRNA(Gly) + AMP + diphosphate. In Alteromonas mediterranea (strain DSM 17117 / CIP 110805 / LMG 28347 / Deep ecotype), this protein is Glycine--tRNA ligase alpha subunit.